Reading from the N-terminus, the 704-residue chain is Elongation factor G (704 aa).

Positions 8–290 (EKYRNIGICA…GVVRYLPAPN (283 aa)) constitute a tr-type G domain. GTP-binding positions include 17-24 (AHVDAGKT), 88-92 (DTPGH), and 142-145 (NKMD).

The protein belongs to the TRAFAC class translation factor GTPase superfamily. Classic translation factor GTPase family. EF-G/EF-2 subfamily.

The protein resides in the cytoplasm. Functionally, catalyzes the GTP-dependent ribosomal translocation step during translation elongation. During this step, the ribosome changes from the pre-translocational (PRE) to the post-translocational (POST) state as the newly formed A-site-bound peptidyl-tRNA and P-site-bound deacylated tRNA move to the P and E sites, respectively. Catalyzes the coordinated movement of the two tRNA molecules, the mRNA and conformational changes in the ribosome. This Francisella tularensis subsp. holarctica (strain LVS) protein is Elongation factor G.